The primary structure comprises 520 residues: CUGBP Elav-like family member 4 (520 aa).

RRM domains follow at residues 47-128 (IKLF…PADS), 135-215 (RKLF…FADT), and 435-513 (CNLF…LKRP).

The protein belongs to the CELF/BRUNOL family.

Its subcellular location is the nucleus. It is found in the cytoplasm. Its function is as follows. RNA-binding protein that may be implicated in the regulation of pre-mRNA alternative splicing. This Danio rerio (Zebrafish) protein is CUGBP Elav-like family member 4 (celf4).